We begin with the raw amino-acid sequence, 35 residues long: AFGTILKALAKIAAKVVKKLATKPGATYMLKQNLQ.

The residue at position 35 (Gln-35) is a Glutamine amide.

As to expression, expressed by the venom gland.

The protein resides in the secreted. The sequence is that of Cupiennin-2b from Cupiennius salei (American wandering spider).